The primary structure comprises 293 residues: Ribosomal protein L11 methyltransferase (293 aa).

Threonine 145, glycine 166, aspartate 188, and asparagine 230 together coordinate S-adenosyl-L-methionine.

This sequence belongs to the methyltransferase superfamily. PrmA family.

The protein localises to the cytoplasm. It catalyses the reaction L-lysyl-[protein] + 3 S-adenosyl-L-methionine = N(6),N(6),N(6)-trimethyl-L-lysyl-[protein] + 3 S-adenosyl-L-homocysteine + 3 H(+). In terms of biological role, methylates ribosomal protein L11. In Escherichia coli O8 (strain IAI1), this protein is Ribosomal protein L11 methyltransferase.